Reading from the N-terminus, the 469-residue chain is Citrate synthase, mitochondrial (469 aa).

The N-terminal 28 residues, 1–28, are a transit peptide targeting the mitochondrion; the sequence is MAFFRTVTKLRSRLGQPPSLRDSVRCLQ. Residues H304, H350, and D405 contribute to the active site.

The protein belongs to the citrate synthase family. Homodimer.

Its subcellular location is the mitochondrion matrix. The catalysed reaction is oxaloacetate + acetyl-CoA + H2O = citrate + CoA + H(+). The protein operates within carbohydrate metabolism; tricarboxylic acid cycle; isocitrate from oxaloacetate: step 1/2. The sequence is that of Citrate synthase, mitochondrial (MCSI) from Fragaria ananassa (Strawberry).